Here is a 374-residue protein sequence, read N- to C-terminus: Fe(2+) transport protein 1 (374 aa).

An N-terminal signal peptide occupies residues 1-33; sequence MATPRTLVPILPPVAALLLLLVAASSIPILAAA. At 34–62 the chain is on the extracellular side; it reads QPADACGGAPDQAAADGACHDVPRALRLK. Residues 63–83 traverse the membrane as a helical segment; the sequence is LIAIPTILVSSVVGVCLPLLS. Topologically, residues 84–92 are cytoplasmic; that stretch reads RSVPALRPD. A helical membrane pass occupies residues 93-113; the sequence is GGLFAVVKAFASGVILATGYM. Topologically, residues 114 to 137 are extracellular; sequence HVLPDAFNNLTSPCLPRKPWSEFP. The helical transmembrane segment at 138-158 threads the bilayer; that stretch reads FAAFVAMLAAVSTLMADSLML. Topologically, residues 159–219 are cytoplasmic; that stretch reads TYYNRSKPRP…ATQVQLRRNR (61 aa). The interval 166–199 is disordered; that stretch reads PRPSSGGDVAAVADHGESPDQGHRHGHGHGHGHG. The span at 179-188 shows a compositional bias: basic and acidic residues; sequence DHGESPDQGH. A helical membrane pass occupies residues 220–240; that stretch reads VVVQVLEIGIVVHSVVIGLGM. Residues 241–251 lie on the Extracellular side of the membrane; the sequence is GASQNVCTIRP. The helical transmembrane segment at 252 to 272 threads the bilayer; that stretch reads LVAAMCFHQMFEGMGLGGCIL. Over 273–282 the chain is Cytoplasmic; sequence QAEYGRRMRS. The helical transmembrane segment at 283-303 threads the bilayer; sequence VLVFFFSTTTPFGIALGLALT. Topologically, residues 304 to 313 are extracellular; sequence RVYRDNSPTA. A helical membrane pass occupies residues 314-334; that stretch reads LIVVGLLNAASAGLLHYMALV. Over 335–353 the chain is Cytoplasmic; sequence ELLAADFMGPKLQGNVRLQ. Residues 354-374 traverse the membrane as a helical segment; sequence LAAFLAVLLGAGGMSVMAKWA.

Belongs to the ZIP transporter (TC 2.A.5) family. As to expression, expressed in companion cells in the upper region of the root.

The protein resides in the cell membrane. In terms of biological role, iron transporter involved in the uptake of iron from the rhizosphere across the plasma membrane in the root epidermal layer. May also transport other divalent cations. The polypeptide is Fe(2+) transport protein 1 (IRT1) (Oryza sativa subsp. japonica (Rice)).